Reading from the N-terminus, the 919-residue chain is uncharacterized protein (919 aa).

Residues 1–15 (MEALILLSSQQSGSI) are compositionally biased toward low complexity. 6 disordered regions span residues 1–167 (MEAL…DLEN), 179–312 (RFKP…STPS), 415–491 (HIYE…RLSL), 553–739 (QQQQ…TIKP), 751–863 (THNE…NNII), and 883–906 (LNINHQDGPNSASSTPRLPTDHIN). Residues 16-25 (KNNCASTSDI) are compositionally biased toward polar residues. 3 stretches are compositionally biased toward low complexity: residues 34 to 75 (IVIV…SSSS), 96 to 107 (SSPSSSPNTPKT), and 141 to 153 (TPTTTSTSTTPIK). The span at 154–167 (PVKDPKEKEKDLEN) shows a compositional bias: basic and acidic residues. Over residues 186–292 (NNTNNNNNIN…QQSSPTSSQT (107 aa)) the composition is skewed to low complexity. Residues 420–433 (PNENNNGGSFQKPN) show a composition bias toward polar residues. 4 stretches are compositionally biased toward low complexity: residues 450–471 (GVSGSPSHSPRVSQSPRVPSHP), 553–564 (QQQQQQQQQSSS), 573–589 (SQPQNSSSPRQPSQTPQ), and 618–635 (HMPQSPHMPHSPHLMPHS). A compositionally biased stretch (polar residues) spans 678 to 695 (YGSSPNLNGGKGSNNFLQ). Positions 712–723 (SSVDSYSNSSPT) are enriched in low complexity. The segment covering 754-768 (ENYMSSPRQPLSPHN) has biased composition (polar residues). Positions 785 to 797 (PHEHCNYIDKNDE) are enriched in basic and acidic residues. Residues 798 to 863 (YYSNNNNNNN…NNNNNNNNII (66 aa)) show a composition bias toward low complexity. Residues 883–899 (LNINHQDGPNSASSTPR) show a composition bias toward polar residues.

This is an uncharacterized protein from Dictyostelium discoideum (Social amoeba).